The chain runs to 250 residues: 2,3-bisphosphoglycerate-dependent phosphoglycerate mutase (250 aa).

Substrate is bound by residues 10 to 17 (RHGESQWN), 23 to 24 (TG), R62, 89 to 92 (ERHY), K100, 116 to 117 (RR), and 185 to 186 (GN). Catalysis depends on H11, which acts as the Tele-phosphohistidine intermediate. E89 (proton donor/acceptor) is an active-site residue.

The protein belongs to the phosphoglycerate mutase family. BPG-dependent PGAM subfamily. Homodimer.

It carries out the reaction (2R)-2-phosphoglycerate = (2R)-3-phosphoglycerate. It participates in carbohydrate degradation; glycolysis; pyruvate from D-glyceraldehyde 3-phosphate: step 3/5. Its function is as follows. Catalyzes the interconversion of 2-phosphoglycerate and 3-phosphoglycerate. In Sodalis glossinidius (strain morsitans), this protein is 2,3-bisphosphoglycerate-dependent phosphoglycerate mutase.